The following is a 59-amino-acid chain: Large ribosomal subunit protein bL32c (59 aa).

Residues 37–59 (SRSFSSGNEHPKPKGFSGQQTNK) are disordered.

The protein belongs to the bacterial ribosomal protein bL32 family.

The protein localises to the plastid. Its subcellular location is the chloroplast. This is Large ribosomal subunit protein bL32c from Hordeum vulgare (Barley).